Here is a 2871-residue protein sequence, read N- to C-terminus: Desmoplakin (2871 aa).

Residues 1-584 (MSCNGGSHPR…DYMKTIADLE (584 aa)) form an interaction with PKP1, JUP, PKP2 region. Positions 1–1056 (MSCNGGSHPR…ANSENCNKNK (1056 aa)) are globular 1. 2 positions are modified to phosphoserine: Ser-22 and Ser-53. The residue at position 56 (Tyr-56) is a Phosphotyrosine. Phosphothreonine is present on Thr-61. Phosphoserine occurs at positions 165, 166, and 176. Spectrin repeat units lie at residues 178-271 (SGWD…HLRQ) and 272-375 (LQNI…LKEN). Residues 376–446 (AAYFQFFEEA…NLVNKSKKIV (71 aa)) form a Spectrin 3a repeat. An SH3 domain is found at 458–515 (NKPIILRALCDYKQDQKIVHKGDECILKDNNERSKWYVTGPGGVDMLVPSVGLIIPPP). Residues 516–545 (NPLAVDLSCKIEQYYEAILALWNQLYINMK) form a Spectrin 3b repeat. Spectrin repeat units follow at residues 546 to 627 (SLVS…IQLP), 654 to 769 (VIET…SLCT), and 770 to 883 (VRAL…DLEK). Positions 1018 to 1945 (SEMLKSLEDL…QREIDKLRQR (928 aa)) form a coiled coil. Positions 1057–1945 (FLDQNLQKYQ…QREIDKLRQR (889 aa)) are central fibrous rod domain. Phosphoserine is present on residues Ser-1658, Ser-1708, and Ser-2024. A globular 2 region spans residues 1946–2871 (PYGSHRETQT…YSFSSSSIGH (926 aa)). Residues 1960-2208 (TVDTSKLVFD…LLLSVQKRSM (249 aa)) form a 4.5 X 38 AA tandem repeats (Domain A) region. 17 Plectin repeats span residues 2009 to 2045 (QPFL…PEST), 2046 to 2083 (VMLL…FDDR), 2084 to 2121 (QQIY…RETG), 2122 to 2159 (MRLL…RDLY), 2163 to 2197 (NDPR…PHTG), 2198 to 2233 (LLLL…PSTV), 2251 to 2288 (KDFL…PGTA), 2289 to 2326 (LELL…IEFK), 2327 to 2364 (EKLL…KGHG), 2365 to 2402 (IRLL…EELS), 2406 to 2440 (SDPS…EETG), 2456 to 2493 (SQKN…YETF), 2507 to 2544 (TITG…RKFF), 2610 to 2647 (SDTL…SITG), 2648 to 2685 (QRLL…QDMA), 2724 to 2761 (QRFL…GRAA), and 2762 to 2799 (QRLQ…DITG). Phosphoserine occurs at positions 2207, 2209, and 2225. The segment at 2244 to 2446 (DEVGERIKDF…EETGLCLLPL (203 aa)) is 4.5 X 38 AA tandem repeats (Domain B). Positions 2609-2822 (FSDTLEESSP…LPSPYNMSSA (214 aa)) are 4.5 X 38 AA tandem repeats (Domain C). Phosphoserine is present on residues Ser-2810 and Ser-2815. Residues 2810-2823 (SKGLPSPYNMSSAP) are compositionally biased toward polar residues. The interval 2810 to 2871 (SKGLPSPYNM…YSFSSSSIGH (62 aa)) is disordered. Phosphotyrosine is present on Tyr-2817. Ser-2820, Ser-2821, and Ser-2825 each carry phosphoserine. A 6 X 4 AA tandem repeats of G-S-R-[SR] region spans residues 2824–2847 (GSRSGSRSGSRSGSRSGSRSGSRR). A compositionally biased stretch (low complexity) spans 2824–2847 (GSRSGSRSGSRSGSRSGSRSGSRR). Residues Arg-2826 and Arg-2847 each carry the omega-N-methylarginine modification. Ser-2849 bears the Phosphoserine mark. Thr-2853 carries the phosphothreonine modification. A compositionally biased stretch (low complexity) spans 2856–2871 (SSYSYSYSFSSSSIGH). Ser-2868 bears the Phosphoserine mark.

It belongs to the plakin or cytolinker family. In terms of assembly, homodimer. Interacts with COL17A1 (via cytoplasmic region). Interacts with DSC2. Interacts with PKP2. Interacts with PKP1. Interacts weakly with TMEM65. In terms of processing, phosphorylation at Ser-2849 increases association with intermediate filament cytokeratin, potentially facilitating interaction between desmosome junctions and intermediate filament architecture. Expressed in oral mucosa (at protein level). Expressed in arrector pili muscle (at protein level). Expressed in the heart in the heart (at protein level). In terms of tissue distribution, apparently an obligate constituent of all desmosomes. As to expression, resides predominantly in tissues and cells of stratified origin.

Its subcellular location is the cell junction. It is found in the desmosome. It localises to the cell membrane. The protein resides in the cytoplasm. Its function is as follows. Major high molecular weight protein of desmosomes. Regulates profibrotic gene expression in cardiomyocytes via activation of the MAPK14/p38 MAPK signaling cascade and increase in TGFB1 protein abundance. The chain is Desmoplakin (DSP) from Homo sapiens (Human).